Here is a 1452-residue protein sequence, read N- to C-terminus: Arf-GAP with Rho-GAP domain, ANK repeat and PH domain-containing protein 1 (1452 aa).

Positions aspartate 6–proline 70 constitute an SAM domain. Residues proline 81–arginine 90 form a required for interaction with SH3KBP1 region. Disordered stretches follow at residues histidine 87–arginine 258 and glutamate 271–proline 304. 3 stretches are compositionally biased toward pro residues: residues proline 92 to threonine 104, serine 154 to proline 167, and proline 205 to leucine 225. Acidic residues-rich tracts occupy residues glutamate 228 to glutamate 239 and glutamate 271 to histidine 286. Serine 232 is subject to Phosphoserine. At tyrosine 234 the chain carries Phosphotyrosine; by PTK6. The region spanning proline 329 to valine 421 is the PH 1 domain. A Phosphoserine modification is found at serine 430. In terms of domain architecture, PH 2 spans glutamine 442–alanine 531. Tyrosine 506 is modified (phosphotyrosine). An Arf-GAP domain is found at serine 537 to glutamate 662. A C4-type zinc finger spans residues cysteine 552–cysteine 575. Serine 740 carries the phosphoserine modification. The PH 3 domain maps to threonine 745 to valine 852. The Rho-GAP domain occupies alanine 956–phenylalanine 1141. In terms of domain architecture, Ras-associating spans glycine 1174–serine 1263. Residues glycine 1276–histidine 1398 enclose the PH 4 domain. Phosphoserine is present on residues serine 1430 and serine 1437.

In terms of assembly, interacts with SH3KBP1/CIN85 (via SH3 domains). The interaction is independent of EGF and does not affect ARAP1 GTPase-activating activity but is involved in regulating ubiquitination and endocytic trafficking of EGFR. ARAP1 competes with E3 ubiquitin-protein ligase CBL for binding to SH3KBP1, preventing interaction of CBL with SH3KBP1; this is likely to regulate SH3KBP1-mediated internalization of EGFR. Interacts with TNFRSF10A. Post-translationally, phosphorylated by PTK6 following EGF stimulation which enhances EGFR signaling by delaying EGFR down-regulation; the interaction is mediated by the SH2 domain of PTK6. Phosphorylation promotes association with the Golgi apparatus and endosomes. In terms of tissue distribution, expressed in the retina where it is detected in Mueller glia (at protein level). Also detected in the retinal pigment epithelium (at protein level). Expressed in osteoclasts (at protein level).

It localises to the cytoplasm. It is found in the golgi apparatus. Its subcellular location is the trans-Golgi network. The protein localises to the golgi stack membrane. The protein resides in the cell membrane. It localises to the endosome. It is found in the multivesicular body. Its subcellular location is the cell projection. The protein localises to the ruffle. The protein resides in the podosome. It localises to the early endosome. Phosphatidylinositol 3,4,5-trisphosphate-dependent GTPase-activating protein that modulates actin cytoskeleton remodeling by regulating ARF and RHO family members. Activated by phosphatidylinositol 3,4,5-trisphosphate (PtdIns(3,4,5)P3) binding and, to a lesser extent, by phosphatidylinositol 3,4-bisphosphate (PtdIns(3,4)P2) binding. Has a preference for ARF1 and ARF5. Positively regulates the ring size of circular dorsal ruffles and promotes macropinocytosis. Acts as a bridging factor in osteoclasts to control actin and membrane dynamics. Regulates the condensing of osteoclast podosomes into sealing zones which segregate the bone-facing membrane from other membrane domains and are required for osteoclast resorption activity. Also regulates recruitment of the AP-3 complex to endosomal membranes and trafficking of lysosomal membrane proteins to the ruffled membrane border of osteoclasts to modulate bone resorption. Regulates the endocytic trafficking of EGFR. Regulates the incorporation of CD63 and CD9 into multivesicular bodies. Required in the retinal pigment epithelium (RPE) for photoreceptor survival due to its role in promoting RPE phagocytosis. This Mus musculus (Mouse) protein is Arf-GAP with Rho-GAP domain, ANK repeat and PH domain-containing protein 1.